Here is a 155-residue protein sequence, read N- to C-terminus: Ribonuclease H (155 aa).

The region spanning 1–142 is the RNase H type-1 domain; the sequence is MTKQVEIFTD…CDELARAAAM (142 aa). Residues D10, E48, D70, and D134 each contribute to the Mg(2+) site.

The protein belongs to the RNase H family. As to quaternary structure, monomer. It depends on Mg(2+) as a cofactor.

The protein localises to the cytoplasm. The catalysed reaction is Endonucleolytic cleavage to 5'-phosphomonoester.. Its function is as follows. Endonuclease that specifically degrades the RNA of RNA-DNA hybrids. This Enterobacter sp. (strain 638) protein is Ribonuclease H.